The chain runs to 102 residues: Acid shock protein (102 aa).

The first 21 residues, 1–21 (MKKVLALVVAAAMGLSSAAFA), serve as a signal peptide directing secretion. The span at 22–41 (AETATTPAPTATTTKAAPAK) shows a compositional bias: low complexity. The propeptide occupies 22–58 (AETATTPAPTATTTKAAPAKTTHHKKQHKAAPAQKAQ). The disordered stretch occupies residues 22–102 (AETATTPAPT…PAKPAAQPAA (81 aa)). Basic residues predominate over residues 80–90 (AAKKHAGKHGH). The span at 91–102 (QQPAKPAAQPAA) shows a compositional bias: low complexity.

Belongs to the Asr family. In terms of processing, proteolytic processing gives rise to the active protein.

The protein resides in the periplasm. Its function is as follows. Required for growth and/or survival at acidic conditions. This Shigella flexneri protein is Acid shock protein.